A 170-amino-acid chain; its full sequence is Peptide deformylase (170 aa).

Residues Cys94 and His136 each contribute to the Fe cation site. Residue Glu137 is part of the active site. His140 lines the Fe cation pocket.

The protein belongs to the polypeptide deformylase family. The cofactor is Fe(2+).

It carries out the reaction N-terminal N-formyl-L-methionyl-[peptide] + H2O = N-terminal L-methionyl-[peptide] + formate. Functionally, removes the formyl group from the N-terminal Met of newly synthesized proteins. Requires at least a dipeptide for an efficient rate of reaction. N-terminal L-methionine is a prerequisite for activity but the enzyme has broad specificity at other positions. The sequence is that of Peptide deformylase from Agrobacterium fabrum (strain C58 / ATCC 33970) (Agrobacterium tumefaciens (strain C58)).